A 591-amino-acid polypeptide reads, in one-letter code: Aspartate--tRNA ligase (591 aa).

L-aspartate is bound at residue Glu-176. The segment at 200 to 203 (QILK) is aspartate. Arg-222 is a binding site for L-aspartate. ATP contacts are provided by residues 222–224 (RDE) and Gln-231. Residue His-450 participates in L-aspartate binding. Glu-484 lines the ATP pocket. Arg-491 lines the L-aspartate pocket. 536–539 (GLDR) contacts ATP.

It belongs to the class-II aminoacyl-tRNA synthetase family. Type 1 subfamily. In terms of assembly, homodimer.

It is found in the cytoplasm. The enzyme catalyses tRNA(Asp) + L-aspartate + ATP = L-aspartyl-tRNA(Asp) + AMP + diphosphate. In terms of biological role, catalyzes the attachment of L-aspartate to tRNA(Asp) in a two-step reaction: L-aspartate is first activated by ATP to form Asp-AMP and then transferred to the acceptor end of tRNA(Asp). The chain is Aspartate--tRNA ligase from Listeria welshimeri serovar 6b (strain ATCC 35897 / DSM 20650 / CCUG 15529 / CIP 8149 / NCTC 11857 / SLCC 5334 / V8).